The primary structure comprises 334 residues: Glycosylinositol phosphorylceramide mannosyl transferase 1 (334 aa).

At 1-26 (MGGGEVSKEMGACSLAYRRGDQKLRK) the chain is on the cytoplasmic side. Residues 27-49 (FVTARSTKFLLFCCIAFVLVTIV) traverse the membrane as a helical; Signal-anchor for type II membrane protein segment. Over 50 to 334 (CRSSRPWVNS…AVDSRNLWFW (285 aa)) the chain is Lumenal. N-linked (GlcNAc...) asparagine glycosylation is present at Asn58. Residues 145–150 (DSLNNR), 166–168 (DDD), Arg196, and 258–262 (RNCED) contribute to the substrate site. Position 168 (Asp168) interacts with Mn(2+). Cysteines 260 and 305 form a disulfide. Residue Asp262 is part of the active site. A glycan (N-linked (GlcNAc...) asparagine) is linked at Asn271. Substrate contacts are provided by residues 289–302 (STGISSIGGHTEKR) and 292–302 (ISSIGGHTEKR).

This sequence belongs to the glycosyltransferase 64 family. It depends on Mn(2+) as a cofactor. Expressed in leaves, roots, stem, and flowers.

Its subcellular location is the golgi apparatus membrane. It participates in protein modification; protein glycosylation. The protein operates within sphingolipid metabolism. Functionally, mannosyl transferase (ManT) required for the biosynthesis of mannose-carrying glycosylinositol phosphorylceramides (GIPCs). Maybe involved in cell-cell adhesion that maintains the integrity of organs by providing mechanical strength and facilitating the movement of metabolites throughout the plant during development. Prevents abscisic acid- (ABA-) mediated effects on development (e.g. cell size, flowering time, senescence). Probably implicated in beta-(1,4)-galactan biosynthesis thus being a cell-wall synthesis-related (CWSR) protein. This Arabidopsis thaliana (Mouse-ear cress) protein is Glycosylinositol phosphorylceramide mannosyl transferase 1.